Reading from the N-terminus, the 158-residue chain is UPF0225 protein PSEEN1229 (158 aa).

This sequence belongs to the UPF0225 family.

The chain is UPF0225 protein PSEEN1229 from Pseudomonas entomophila (strain L48).